The chain runs to 329 residues: Malate dehydrogenase (329 aa).

Position 12-18 (12-18 (GAAGQIG)) interacts with NAD(+). The substrate site is built by Arg95 and Arg101. NAD(+)-binding positions include Asn108, Gln115, and 132-134 (VGN). Substrate is bound by residues Asn134 and Arg165. His190 acts as the Proton acceptor in catalysis.

This sequence belongs to the LDH/MDH superfamily. MDH type 2 family. In terms of assembly, homodimer.

It carries out the reaction (S)-malate + NAD(+) = oxaloacetate + NADH + H(+). Its activity is regulated as follows. Substrate inhibition is observed at high concentrations of oxaloacetate. Catalyzes the reversible oxidation of malate to oxaloacetate. Catalyzes the reduction of oxaloacetate more efficiently than the oxidation of malate. This Syntrophobacter fumaroxidans (strain DSM 10017 / MPOB) protein is Malate dehydrogenase.